The chain runs to 239 residues: 7-cyano-7-deazaguanine synthase (239 aa).

ATP is bound at residue 13-23 (FSGGQDSTTCL). Positions 201, 216, 219, and 222 each coordinate Zn(2+).

Belongs to the QueC family. Requires Zn(2+) as cofactor.

The enzyme catalyses 7-carboxy-7-deazaguanine + NH4(+) + ATP = 7-cyano-7-deazaguanine + ADP + phosphate + H2O + H(+). The protein operates within purine metabolism; 7-cyano-7-deazaguanine biosynthesis. Its function is as follows. Catalyzes the ATP-dependent conversion of 7-carboxy-7-deazaguanine (CDG) to 7-cyano-7-deazaguanine (preQ(0)). This Bradyrhizobium sp. (strain BTAi1 / ATCC BAA-1182) protein is 7-cyano-7-deazaguanine synthase.